Consider the following 398-residue polypeptide: Secreted aspartic protease 3 (398 aa).

The N-terminal stretch at 1 to 18 (MFLKNIFIALAIALLADA) is a signal peptide. The propeptide at 19–58 (TPTTFNNSPGFVALNFDVIKTHKNVTGPQGEINTNVNVKR) is activation peptide. An N-linked (GlcNAc...) asparagine glycan is attached at Asn-42. In terms of domain architecture, Peptidase A1 spans 72 to 384 (YASDITVGSN…DLDDNEISLA (313 aa)). The active site involves Asp-90. 90–92 (DTG) contributes to the pepstatin A binding site. Over residues 103 to 112 (VSCQAGQGQD) the composition is skewed to polar residues. Residues 103–139 (VSCQAGQGQDPNFCKNEGTYSPSSSSSSQNLNSPFSI) are disordered. Cys-105 and Cys-116 are joined by a disulfide. The span at 123–138 (SPSSSSSSQNLNSPFS) shows a compositional bias: low complexity. 140–143 (EYGD) provides a ligand contact to pepstatin A. Positions 188, 248, 254, and 270 each coordinate Zn(2+). Asp-274 is an active-site residue. Position 274–278 (274–278 (DSGTT)) interacts with pepstatin A. A disulfide bond links Cys-312 and Cys-350. Asn-313 is a glycosylation site (N-linked (GlcNAc...) asparagine).

This sequence belongs to the peptidase A1 family. In terms of assembly, monomer.

It is found in the secreted. The catalysed reaction is Preferential cleavage at the carboxyl of hydrophobic amino acids, but fails to cleave 15-Leu-|-Tyr-16, 16-Tyr-|-Leu-17 and 24-Phe-|-Phe-25 of insulin B chain. Activates trypsinogen, and degrades keratin.. Its activity is regulated as follows. Inhibited by pepstatin A analogs. Its function is as follows. Secreted aspartic peptidases (SAPs) are a group of ten acidic hydrolases considered as key virulence factors. These enzymes supply the fungus with nutrient amino acids as well as are able to degrade the selected host's proteins involved in the immune defense. Induces host inflammatory cytokine production in a proteolytic activity-independent way. Moreover, acts toward human hemoglobin though limited proteolysis to generate a variety of antimicrobial hemocidins, enabling to compete with the other microorganisms of the same physiological niche using the microbicidal peptides generated from the host protein. In terms of biological role, plays a key role in defense against host by cleaving histatin-5 (Hst 5), a peptide from human saliva that carries out fungicidal activity. The cleavage rate decreases in an order of SAP2 &gt; SAP9 &gt; SAP3 &gt; SAP7 &gt; SAP4 &gt; SAP1 &gt; SAP8. The first cleavage occurs between residues 'Lys-17' and 'His-18' of Hst 5, giving DSHAKRHHGYKRKFHEK and HHSHRGY peptides. Simultaneously, the DSHAKRHHGYKRK peptide is also formed. Further fragmentation by SAP3 results in DSHAKRHHGY and KRKFHEK products. The protein is Secreted aspartic protease 3 of Candida albicans (strain SC5314 / ATCC MYA-2876) (Yeast).